A 101-amino-acid chain; its full sequence is Small ribosomal subunit protein uS14A (101 aa).

The interval 31 to 67 is disordered; that stretch reads LRRPSSTEAERLAAQRELRRQPRDASPTRVRNRDQID. Residues 38 to 53 show a composition bias toward basic and acidic residues; it reads EAERLAAQRELRRQPR.

It belongs to the universal ribosomal protein uS14 family. Part of the 30S ribosomal subunit. Contacts proteins S3 and S10.

In terms of biological role, binds 16S rRNA, required for the assembly of 30S particles and may also be responsible for determining the conformation of the 16S rRNA at the A site. The polypeptide is Small ribosomal subunit protein uS14A (Streptomyces coelicolor (strain ATCC BAA-471 / A3(2) / M145)).